Consider the following 691-residue polypeptide: Elongation factor G (691 aa).

One can recognise a tr-type G domain in the interval 8 to 283 (EDYRNFGIMA…AVVDYLPSPA (276 aa)). GTP is bound by residues 17–24 (AHIDAGKT), 81–85 (DTPGH), and 135–138 (NKMD).

It belongs to the TRAFAC class translation factor GTPase superfamily. Classic translation factor GTPase family. EF-G/EF-2 subfamily.

It localises to the cytoplasm. Its function is as follows. Catalyzes the GTP-dependent ribosomal translocation step during translation elongation. During this step, the ribosome changes from the pre-translocational (PRE) to the post-translocational (POST) state as the newly formed A-site-bound peptidyl-tRNA and P-site-bound deacylated tRNA move to the P and E sites, respectively. Catalyzes the coordinated movement of the two tRNA molecules, the mRNA and conformational changes in the ribosome. This chain is Elongation factor G, found in Methylobacterium sp. (strain 4-46).